We begin with the raw amino-acid sequence, 279 residues long: Dehydrogenase/reductase SDR family member 4 (279 aa).

An NADP(+)-binding site is contributed by 37–61; that stretch reads LVTASTDGIGLAIARRLAQDGAHVV. Lys-93 carries the N6-acetyllysine; alternate modification. Residue Lys-93 is modified to N6-succinyllysine; alternate. Substrate is bound at residue Ser-170. The active-site Proton acceptor is Tyr-183. NADP(+) is bound at residue Lys-187. At Lys-217 the chain carries N6-acetyllysine; alternate. At Lys-217 the chain carries N6-succinyllysine; alternate. Residue Ser-221 is modified to Phosphoserine. N6-succinyllysine is present on residues Lys-228 and Lys-235. The short motif at 277-279 is the Peroxisomal targeting signal element; it reads SRL.

It belongs to the short-chain dehydrogenases/reductases (SDR) family. Homotetramer. Detected in heart, kidney, liver and small intestine. Detected at lower levels in brain, lung, stomach and spleen.

The protein localises to the peroxisome. It catalyses the reaction a secondary alcohol + NADP(+) = a ketone + NADPH + H(+). The enzyme catalyses 3alpha-hydroxy-5beta-pregnan-20-one + NADP(+) = 5beta-pregnan-3,20-dione + NADPH + H(+). It carries out the reaction 5beta-dihydrotestosterone + NADPH + H(+) = 5beta-androstane-3alpha,17beta-diol + NADP(+). The catalysed reaction is all-trans-retinol + NADP(+) = all-trans-retinal + NADPH + H(+). It catalyses the reaction isatin + NADPH + H(+) = 3-hydroxyindolin-2-one + NADP(+). With respect to regulation, inhibited by kaempferol, quercetin, genistein and myristic acid. Functionally, NADPH-dependent oxidoreductase which catalyzes the reduction of a variety of compounds bearing carbonyl groups including ketosteroids, alpha-dicarbonyl compounds, aldehydes, aromatic ketones and quinones. Reduces all-trans-retinal and 9-cis retinal. Reduces 3-ketosteroids and benzil into 3alpha-hydroxysteroids and S-benzoin, respectively, in contrast to the stereoselectivity of primates DHRS4s which produce 3beta-hydroxysteroids and R-benzoin. In the reverse reaction, catalyzes the NADP-dependent oxidation of 3alpha-hydroxysteroids and alcohol, but with much lower efficiency. Involved in the metabolism of 3alpha-hydroxysteroids, retinoid, isatin and xenobiotic carbonyl compounds. The polypeptide is Dehydrogenase/reductase SDR family member 4 (DHRS4) (Sus scrofa (Pig)).